The sequence spans 78 residues: UPF0270 protein IL0325 (78 aa).

Belongs to the UPF0270 family.

This chain is UPF0270 protein IL0325, found in Idiomarina loihiensis (strain ATCC BAA-735 / DSM 15497 / L2-TR).